Reading from the N-terminus, the 404-residue chain is Tryptophan synthase beta chain (404 aa).

Lys91 carries the N6-(pyridoxal phosphate)lysine modification.

Belongs to the TrpB family. As to quaternary structure, tetramer of two alpha and two beta chains. Pyridoxal 5'-phosphate serves as cofactor.

The enzyme catalyses (1S,2R)-1-C-(indol-3-yl)glycerol 3-phosphate + L-serine = D-glyceraldehyde 3-phosphate + L-tryptophan + H2O. It functions in the pathway amino-acid biosynthesis; L-tryptophan biosynthesis; L-tryptophan from chorismate: step 5/5. Functionally, the beta subunit is responsible for the synthesis of L-tryptophan from indole and L-serine. The protein is Tryptophan synthase beta chain of Clavibacter michiganensis subsp. michiganensis (strain NCPPB 382).